The following is a 656-amino-acid chain: MASNKILGIDLGTTNSAFAVMEGGDPEIIVNSEGERTTPSVVAFTDDGERLVGKPAKNQAVQNPEDTIQSIKRHMGEDDYTVEVGDDEYTPEQISAMILQKIKRDAEEYLGDDIEKAVITVPAYFNDRQRQATKDAGEIAGFEVERIVNEPTAAAMAYGLDDESDQTVLVYDLGGGTFDVSILDLGGGVYEVVATNGDNDLGGDDWDEAIIDYLADSFEEEHGIDLREDRQALQRLHEAAEEAKIELSSRKETNINLPFIAATDEGPLNLEESISRAKFESLTSDLVERTVGPTEQALDDAGYSKGDIDEVILVGGSTRMPMVQEKVEELTGQEPKKNVNPDEAVGLGAAIQGGVLSGDVDDIVLLDVTPLSLGIEVKGGLFERLIDKNTTIPTEASKVFTTAADNQTSVNIRVFQGEREIAEENELLGAFQLTGIPPAPAGTPQIEVTFNIDENGIVNVEAEDQGSGNKEDITIEGGVGLSDEEIEEMQEEAEKHAEEDEKRRERIEARNEAESTLQRAETLLDENEDAVDDDLRADIEASMDDLREVVEDEDADTDELTEATEALAEALQEIGKQMYQQQAGEGGAGAGAGAAGGMGGAGPGGMGGAGPGGMGGAGPGGMGGAGPGAGAGQQGDGEEFVDADFEDVDDEDDEDE.

2 disordered regions span residues 488–532 (EMQE…DAVD) and 579–656 (YQQQ…DEDE). A compositionally biased stretch (basic and acidic residues) spans 492–513 (EAEKHAEEDEKRRERIEARNEA). Positions 523–532 (LLDENEDAVD) are enriched in acidic residues. Positions 584-635 (GEGGAGAGAGAAGGMGGAGPGGMGGAGPGGMGGAGPGGMGGAGPGAGAGQQG) are enriched in gly residues. Acidic residues predominate over residues 636–656 (DGEEFVDADFEDVDDEDDEDE).

It belongs to the heat shock protein 70 family.

Acts as a chaperone. The protein is Chaperone protein DnaK of Natronomonas pharaonis (strain ATCC 35678 / DSM 2160 / CIP 103997 / JCM 8858 / NBRC 14720 / NCIMB 2260 / Gabara) (Halobacterium pharaonis).